The sequence spans 148 residues: Sperm-specific protein PHI-2B (148 aa).

Basic residues predominate over residues 1–35 (PSPSRRSRSRSRSRSKSPKRSPAKKARKTPKKRRA). Disordered stretches follow at residues 1–44 (PSPS…KPST) and 97–148 (GVLV…KSNN). The H15 domain occupies 40–119 (KKPSTLSMIV…GATGSFRVGK (80 aa)). Positions 124 to 148 (PKKKAKKAKSPKKKSSKKSSNKSNN) are enriched in basic residues.

The protein belongs to the histone H1/H5 family. In terms of tissue distribution, sperm.

The protein localises to the nucleus. It localises to the chromosome. Its function is as follows. Linker histones are implicated in chromatin remodeling and/or transcriptional regulation during spermiogenesis, the process of spermatid maturation into spermatozoa. This Mytilus californianus (California mussel) protein is Sperm-specific protein PHI-2B.